Reading from the N-terminus, the 426-residue chain is UPF0597 protein CLB_1750 (426 aa).

It belongs to the UPF0597 family.

The polypeptide is UPF0597 protein CLB_1750 (Clostridium botulinum (strain ATCC 19397 / Type A)).